Reading from the N-terminus, the 543-residue chain is Chaperonin GroEL (543 aa).

ATP-binding positions include 30 to 33 (TLGP), Lys-51, 87 to 91 (DGTTT), Gly-415, and Asp-496.

The protein belongs to the chaperonin (HSP60) family. Forms a cylinder of 14 subunits composed of two heptameric rings stacked back-to-back. Interacts with the co-chaperonin GroES.

Its subcellular location is the cytoplasm. The enzyme catalyses ATP + H2O + a folded polypeptide = ADP + phosphate + an unfolded polypeptide.. Its function is as follows. Together with its co-chaperonin GroES, plays an essential role in assisting protein folding. The GroEL-GroES system forms a nano-cage that allows encapsulation of the non-native substrate proteins and provides a physical environment optimized to promote and accelerate protein folding. The protein is Chaperonin GroEL of Gluconobacter oxydans (strain 621H) (Gluconobacter suboxydans).